Reading from the N-terminus, the 293-residue chain is Pre-mRNA-splicing factor cwf21 (293 aa).

Disordered stretches follow at residues 30 to 52 (YDKN…VQDP), 80 to 119 (SQHS…TKSL), and 146 to 293 (EKGK…GEIV). Residues 43-52 (KALEKRVQDP) are compositionally biased toward basic and acidic residues. The CWF21 domain maps to 55-98 (SEHECRRQIESKLLLYREQLLEEVSSQHSTDAAASDSNTNFGTE). The span at 80 to 97 (SQHSTDAAASDSNTNFGT) shows a compositional bias: polar residues. 4 stretches are compositionally biased toward basic and acidic residues: residues 106–119 (IIKD…TKSL), 159–186 (KRKE…RSSV), 195–214 (RYSE…YNEN), and 227–259 (ELER…ERYS). Ser-118 bears the Phosphoserine mark. Residues Ser-285 and Ser-286 each carry the phosphoserine modification.

The protein belongs to the CWC21 family. In terms of assembly, belongs to the 40S cdc5-associated complex (or cwf complex), a spliceosome sub-complex reminiscent of a late-stage spliceosome composed of the U2, U5 and U6 snRNAs and at least brr2, cdc5, cwf2/prp3, cwf3/syf1, cwf4/syf3, cwf5/ecm2, spp42/cwf6, cwf7/spf27, cwf8, cwf9, cwf10, cwf11, cwf12, prp45/cwf13, cwf14, cwf15, cwf16, cwf17, cwf18, cwf19, cwf20, cwf21, cwf22, cwf23, cwf24, cwf25, cwf26, cyp7/cwf27, cwf28, cwf29/ist3, lea1, msl1, prp5/cwf1, prp10, prp12/sap130, prp17, prp22, sap61, sap62, sap114, sap145, slu7, smb1, smd1, smd3, smf1, smg1 and syf2.

It localises to the cytoplasm. The protein localises to the nucleus. In terms of biological role, involved in pre-mRNA splicing. May function at or prior to the first catalytic step of splicing at the catalytic center of the spliceosome. May do so by stabilizing the catalytic center or the position of the RNA substrate. In Schizosaccharomyces pombe (strain 972 / ATCC 24843) (Fission yeast), this protein is Pre-mRNA-splicing factor cwf21 (cwf21).